A 543-amino-acid chain; its full sequence is Cytochrome P450 52A1 (543 aa).

Residues 1-28 are Lumenal-facing; sequence MSSSPSIAQEFLATITPYVEYCQENYTK. A helical membrane pass occupies residues 29 to 48; that stretch reads WYYFIPLVILSLNLISMLHT. Topologically, residues 49 to 543 are cytoplasmic; it reads KYLERKFKAK…GAEVQMYLIL (495 aa). Cys487 is a heme binding site.

This sequence belongs to the cytochrome P450 family. Heme serves as cofactor.

The protein localises to the endoplasmic reticulum membrane. In terms of biological role, together with an NADPH cytochrome P450 the enzyme system catalyzes the terminal hydroxylation as the first step in the assimilation of alkanes and fatty acids. The polypeptide is Cytochrome P450 52A1 (CYP52A1) (Candida tropicalis (Yeast)).